A 211-amino-acid polypeptide reads, in one-letter code: Putative ATP-dependent Clp protease proteolytic subunit-like (211 aa).

Residues 1–24 are disordered; sequence MTRPSARHVLPEFTERTSAGTRTS. His129 is an active-site residue.

It belongs to the peptidase S14 family.

Has lost one of the conserved residue (Ser) proposed to be part of the active site. Therefore it could be inactive. In Streptomyces coelicolor (strain ATCC BAA-471 / A3(2) / M145), this protein is Putative ATP-dependent Clp protease proteolytic subunit-like.